We begin with the raw amino-acid sequence, 283 residues long: Urease accessory protein UreD 2 (283 aa).

Residues 1–11 show a composition bias toward basic and acidic residues; the sequence is MGRRAPDRLDR. Residues 1 to 30 form a disordered region; it reads MGRRAPDRLDRGVTTTSPRTQAPPQAGRGV. A compositionally biased stretch (polar residues) spans 13–23; it reads VTTTSPRTQAP.

Belongs to the UreD family. In terms of assembly, ureD, UreF and UreG form a complex that acts as a GTP-hydrolysis-dependent molecular chaperone, activating the urease apoprotein by helping to assemble the nickel containing metallocenter of UreC. The UreE protein probably delivers the nickel.

It is found in the cytoplasm. Required for maturation of urease via the functional incorporation of the urease nickel metallocenter. The polypeptide is Urease accessory protein UreD 2 (Saccharopolyspora erythraea (strain ATCC 11635 / DSM 40517 / JCM 4748 / NBRC 13426 / NCIMB 8594 / NRRL 2338)).